We begin with the raw amino-acid sequence, 285 residues long: Urease accessory protein UreD (285 aa).

The protein belongs to the UreD family. As to quaternary structure, ureD, UreF and UreG form a complex that acts as a GTP-hydrolysis-dependent molecular chaperone, activating the urease apoprotein by helping to assemble the nickel containing metallocenter of UreC. The UreE protein probably delivers the nickel.

Its subcellular location is the cytoplasm. Its function is as follows. Required for maturation of urease via the functional incorporation of the urease nickel metallocenter. The chain is Urease accessory protein UreD from Methylobacillus flagellatus (strain ATCC 51484 / DSM 6875 / VKM B-1610 / KT).